We begin with the raw amino-acid sequence, 1061 residues long: Carbamoyl phosphate synthase large chain (1061 aa).

Positions 1–401 (MPKRTDVHKI…ALQKAVRSLE (401 aa)) are carboxyphosphate synthetic domain. Arginine 129, arginine 169, glycine 175, glycine 176, lysine 208, isoleucine 210, glutamate 215, glycine 241, isoleucine 242, histidine 243, glutamine 284, and glutamate 298 together coordinate ATP. Positions 133–327 (KDLMQELNEP…IAKLAAKIAV (195 aa)) constitute an ATP-grasp 1 domain. Residues glutamine 284, glutamate 298, and asparagine 300 each coordinate Mg(2+). Positions 284, 298, and 300 each coordinate Mn(2+). The oligomerization domain stretch occupies residues 402 to 546 (IDEKDLISAK…YSSYDLENES (145 aa)). The tract at residues 547-929 (KKSDKKSVLV…ALYKAFTGAK (383 aa)) is carbamoyl phosphate synthetic domain. One can recognise an ATP-grasp 2 domain in the interval 671 to 861 (DQTIKNLGLK…MAQVATRVIL (191 aa)). Residues arginine 707, alanine 746, leucine 748, glutamate 752, glycine 777, valine 778, histidine 779, serine 780, glutamine 820, and glutamate 832 each contribute to the ATP site. Residues glutamine 820, glutamate 832, and asparagine 834 each coordinate Mg(2+). Mn(2+) contacts are provided by glutamine 820, glutamate 832, and asparagine 834. The MGS-like domain maps to 930–1061 (MELPDNGNVL…ENRSFATNSL (132 aa)). The tract at residues 930 to 1061 (MELPDNGNVL…ENRSFATNSL (132 aa)) is allosteric domain.

It belongs to the CarB family. As to quaternary structure, composed of two chains; the small (or glutamine) chain promotes the hydrolysis of glutamine to ammonia, which is used by the large (or ammonia) chain to synthesize carbamoyl phosphate. Tetramer of heterodimers (alpha,beta)4. Mg(2+) serves as cofactor. It depends on Mn(2+) as a cofactor.

The catalysed reaction is hydrogencarbonate + L-glutamine + 2 ATP + H2O = carbamoyl phosphate + L-glutamate + 2 ADP + phosphate + 2 H(+). The enzyme catalyses hydrogencarbonate + NH4(+) + 2 ATP = carbamoyl phosphate + 2 ADP + phosphate + 2 H(+). It functions in the pathway amino-acid biosynthesis; L-arginine biosynthesis; carbamoyl phosphate from bicarbonate: step 1/1. The protein operates within pyrimidine metabolism; UMP biosynthesis via de novo pathway; (S)-dihydroorotate from bicarbonate: step 1/3. Its function is as follows. Large subunit of the glutamine-dependent carbamoyl phosphate synthetase (CPSase). CPSase catalyzes the formation of carbamoyl phosphate from the ammonia moiety of glutamine, carbonate, and phosphate donated by ATP, constituting the first step of 2 biosynthetic pathways, one leading to arginine and/or urea and the other to pyrimidine nucleotides. The large subunit (synthetase) binds the substrates ammonia (free or transferred from glutamine from the small subunit), hydrogencarbonate and ATP and carries out an ATP-coupled ligase reaction, activating hydrogencarbonate by forming carboxy phosphate which reacts with ammonia to form carbamoyl phosphate. This chain is Carbamoyl phosphate synthase large chain, found in Ligilactobacillus salivarius (strain UCC118) (Lactobacillus salivarius).